A 32-amino-acid polypeptide reads, in one-letter code: Photosystem II reaction center protein Z (32 aa).

Residues 12-32 (IGSAAWAGLVLLVGTLNYLVI) form a helical membrane-spanning segment.

Belongs to the PsbZ family. As to quaternary structure, PSII is composed of 1 copy each of membrane proteins PsbA, PsbB, PsbC, PsbD, PsbE, PsbF, PsbH, PsbI, PsbJ, PsbK, PsbL, PsbM, PsbT, PsbY, PsbZ, Psb30/Ycf12, at least 3 peripheral proteins of the oxygen-evolving complex and a large number of cofactors. It forms dimeric complexes.

It is found in the plastid. The protein resides in the chloroplast thylakoid membrane. Its function is as follows. May control the interaction of photosystem II (PSII) cores with the light-harvesting antenna, regulates electron flow through the 2 photosystem reaction centers. PSII is a light-driven water plastoquinone oxidoreductase, using light energy to abstract electrons from H(2)O, generating a proton gradient subsequently used for ATP formation. The sequence is that of Photosystem II reaction center protein Z from Euglena anabaena (Euglenaria anabaena).